A 239-amino-acid polypeptide reads, in one-letter code: Putative CCR4-associated factor 1 homolog 8 (239 aa).

A divalent metal cation contacts are provided by Asp17, Glu19, Asp133, and Asn204.

This sequence belongs to the CAF1 family. In terms of assembly, component of the CCR4-NOT complex, at least composed of CRR4 and CAF1 proteins. A divalent metal cation is required as a cofactor.

The protein resides in the nucleus. The protein localises to the cytoplasm. It carries out the reaction Exonucleolytic cleavage of poly(A) to 5'-AMP.. Functionally, ubiquitous transcription factor required for a diverse set of processes. It is a component of the CCR4 complex involved in the control of gene expression. The protein is Putative CCR4-associated factor 1 homolog 8 (CAF1-8) of Arabidopsis thaliana (Mouse-ear cress).